Here is a 164-residue protein sequence, read N- to C-terminus: Ubiquitin-fold modifier-conjugating enzyme 1 (164 aa).

The active-site Glycyl thioester intermediate is Cys-116.

The protein belongs to the ubiquitin-conjugating enzyme family. UFC1 subfamily.

Its function is as follows. E2-like enzyme which forms an intermediate with UFM1 via a thioester linkage. The protein is Ubiquitin-fold modifier-conjugating enzyme 1 of Drosophila ananassae (Fruit fly).